The primary structure comprises 84 residues: Large ribosomal subunit protein bL31B (84 aa).

This sequence belongs to the bacterial ribosomal protein bL31 family. Type B subfamily. Part of the 50S ribosomal subunit.

This chain is Large ribosomal subunit protein bL31B, found in Bacteroides thetaiotaomicron (strain ATCC 29148 / DSM 2079 / JCM 5827 / CCUG 10774 / NCTC 10582 / VPI-5482 / E50).